The following is a 365-amino-acid chain: Tetraacyldisaccharide 4'-kinase (365 aa).

68-75 is a binding site for ATP; it reads VVGGAGKT.

The protein belongs to the LpxK family.

It carries out the reaction a lipid A disaccharide + ATP = a lipid IVA + ADP + H(+). It participates in glycolipid biosynthesis; lipid IV(A) biosynthesis; lipid IV(A) from (3R)-3-hydroxytetradecanoyl-[acyl-carrier-protein] and UDP-N-acetyl-alpha-D-glucosamine: step 6/6. Transfers the gamma-phosphate of ATP to the 4'-position of a tetraacyldisaccharide 1-phosphate intermediate (termed DS-1-P) to form tetraacyldisaccharide 1,4'-bis-phosphate (lipid IVA). This is Tetraacyldisaccharide 4'-kinase from Chlamydia pneumoniae (Chlamydophila pneumoniae).